A 249-amino-acid polypeptide reads, in one-letter code: Low affinity immunoglobulin gamma Fc region receptor III-A (249 aa).

An N-terminal signal peptide occupies residues 1–20; it reads MWYLLLPTALLLTVSSGVGA. Residues 21–203 are Extracellular-facing; sequence GLQKAVVNLD…SPSSFLPWHQ (183 aa). 2 Ig-like C2-type domains span residues 31–103 and 117–188; these read PEWV…QLDV and FQEG…LQIS. Cystine bridges form between Cys-46/Cys-88 and Cys-127/Cys-171. Asn-55 and Asn-62 each carry an N-linked (GlcNAc...) asparagine glycan. N-linked (GlcNAc...) asparagine glycosylation occurs at Asn-179. Residues 204–224 form a helical membrane-spanning segment; sequence ITFCLLIGLLFAIDTVLYFSV. At 225–249 the chain is on the cytoplasmic side; sequence QRSLQSSVAVYEEPKLHWSKEPQDK. Position 235 is a phosphotyrosine (Tyr-235).

In terms of assembly, forms a heterooligomeric complex with ITAM-containing signaling subunits FCER1G. Interacts (via transmembrane domain) with signaling subunits; this interaction is a prerequisite for receptor complex expression on the cell surface and intracellular signal transduction. Binds the Fc region of antigen-complexed IgG. N-glycosylated. Post-translationally, phosphorylated following receptor ligation.

The protein resides in the cell membrane. Receptor for the invariable Fc fragment of immunoglobulin gamma (IgG). Binds with intermediate affinity to both IgG2a and IgG2b. Can bind to IgG2a and IgG2b monomers. Does not display binding to IgG1 or IgG3. Recognizes neutralizing virus-specific IgGs displayed on the cell surface of infected cells and triggers antibody-dependent cellular cytotoxicity (ADCC). Confers protection to lethal influenza virus infection. On splenic dendritic cells, uptakes antigen immune complexes and efficiently divert them into MHC class I and II antigen presentation pathways to provide for superior priming of CD4-positive and CD8-positive T cell immune responses. Mediates neutrophil activation by IgG complexes redundantly with FCGR2A. Plays a role in promoting bone resorption by enhancing osteoclast differentiation following binding to IgG2a. Also acts as a receptor for the Fc region of immunoglobulin epsilon (IgE). Binds with low affinity to both the a and b allotypes of IgE. Has also been shown to bind to IgE allotype a only but not to allotype b. Binds aggregated IgE but not the monomeric form and bound monomeric IgG is readily displaced by IgE complexes. Binding to IgE promotes macrophage-mediated phagocytosis, antigen presentation to T cells, production of pro-inflammatory cytokines and the late phase of cutaneous allergic reactions. Mediates enhanced ADCC in response to afucosylated IgGs. The protein is Low affinity immunoglobulin gamma Fc region receptor III-A of Rattus norvegicus (Rat).